The primary structure comprises 285 residues: Steroidogenic acute regulatory protein, mitochondrial (285 aa).

The N-terminal 63 residues, 1–63, are a transit peptide targeting the mitochondrion; that stretch reads MLLATFKLCA…RRGSLLGSQL (63 aa). Phosphoserine; by PKA occurs at positions 57 and 195. The region spanning 67-280 is the START domain; sequence LYSDQELAYI…LRKRLESCPA (214 aa).

In terms of assembly, may interact with TSPO.

It is found in the mitochondrion. It carries out the reaction cholesterol(in) = cholesterol(out). It functions in the pathway steroid metabolism; cholesterol metabolism. Functionally, plays a key role in steroid hormone synthesis by enhancing the metabolism of cholesterol into pregnenolone. Mediates the transfer of cholesterol from the outer mitochondrial membrane to the inner mitochondrial membrane where it is cleaved to pregnenolone. The sequence is that of Steroidogenic acute regulatory protein, mitochondrial (STAR) from Ovis aries (Sheep).